The following is a 66-amino-acid chain: Nigrocin-2ISb (66 aa).

The signal sequence occupies residues 1–22; that stretch reads MFTLKKSMLLLFFLGTINLSLC. Positions 23-43 are cleaved as a propeptide — removed in mature form; it reads QEERDAEEERRDEDNAKMEEI. Residues Cys-60 and Cys-66 are joined by a disulfide bond.

In terms of tissue distribution, expressed by the skin glands.

The protein localises to the secreted. Functionally, has antimicrobial activity against Gram-negative bacterium E.coli ATCC 8739 (MIC=50 ug), against Gram positive bacteria S.aureus ATCC 6538 (MIC=3.1 ug), methicillin-resistant S.aureus ATCC 43300 (MIC=12.5 ug), B.subtilis ATCC 6633 (MIC=12.5 ug) and against fungus C.albicans ATCC 90028 (MIC=50 ug). This is Nigrocin-2ISb from Odorrana ishikawae (Ishikawa's frog).